Reading from the N-terminus, the 529-residue chain is UDP-glycosyltransferase (529 aa).

Residues Asn-70 and Asn-420 are each glycosylated (N-linked (GlcNAc...) asparagine). The helical transmembrane segment at Leu-504–Ile-524 threads the bilayer.

This sequence belongs to the glycosyltransferase 28 family.

Its subcellular location is the membrane. It catalyses the reaction stromemycin aglycone + UDP-alpha-D-glucose = stromemycin + UDP + H(+). Its pathway is mycotoxin biosynthesis. Its function is as follows. UDP-glycosyltransferase; part of the gene cluster that mediates the biosynthesis of stromemycin, a depside C-glucoside with two unsaturated C9 side chains belonging to aromatic polyketide glycosides. Acts as the tailoring enzyme responsible for 3-C-glucosylation of bininalkenylresorcylic acid to yield stromemycin. The polypeptide is UDP-glycosyltransferase (Talaromyces amestolkiae).